Here is a 424-residue protein sequence, read N- to C-terminus: UPF0597 protein Sputw3181_2955 (424 aa).

Belongs to the UPF0597 family.

The sequence is that of UPF0597 protein Sputw3181_2955 from Shewanella sp. (strain W3-18-1).